Consider the following 122-residue polypeptide: T-cell receptor beta chain V region C5 (122 aa).

The signal sequence occupies residues 1–7; it reads ILLCAKH. A v segment region spans residues 8 to 103; sequence MEAAVTQSPR…TAVYFCASSG (96 aa). Cys31 and Cys99 are oxidised to a cystine. The tract at residues 104–108 is d segment; the sequence is TGGAL. The tract at residues 109-122 is j segment; that stretch reads DTQYFGPGTRLLVL.

The polypeptide is T-cell receptor beta chain V region C5 (Mus musculus (Mouse)).